Consider the following 1959-residue polypeptide: Zinc finger protein hangover (1959 aa).

One can recognise a ZAD domain in the interval 79 to 155 (NCCRLCIAPQ…FSSQAKQRQW (77 aa)). The Zn(2+) site is built by cysteine 81, cysteine 84, cysteine 128, and cysteine 131. The interval 178–208 (GFFDQHLHQQQQHHQHLENELEAEKEKATPT) is disordered. Residues 192–205 (QHLENELEAEKEKA) show a composition bias toward basic and acidic residues. The residue at position 228 (serine 228) is a Phosphoserine. Threonine 246 carries the post-translational modification Phosphothreonine. A C2H2-type 1 zinc finger spans residues 318–341 (ASCRACSLQFSTRANARRHERNLH). The C2H2-type 2; degenerate zinc finger occupies 447–469 (MTCRCCNKYFSTYKNFMAHVRKK). A C2H2-type 3 zinc finger spans residues 581-604 (YECKLCPKGFRTKHEFRTHVYDKH). Positions 674 to 762 (AVSDNASTTG…ANRDASAPKS (89 aa)) are disordered. A compositionally biased stretch (polar residues) spans 677–693 (DNASTTGSGMARSNSME). Serine 680 bears the Phosphoserine mark. Low complexity-rich tracts occupy residues 716-727 (SSSAAPPLTSTP) and 741-759 (TSAS…DASA). 2 consecutive C2H2-type zinc fingers follow at residues 770–793 (QVCP…ESKH) and 801–824 (YKCV…INVH). 5 positions are modified to phosphoserine: serine 832, serine 894, serine 895, serine 898, and serine 899. The C2H2-type 6 zinc finger occupies 908-930 (KECPICNAVFSNNIGLSNHMRSH). The interval 960–991 (TDSELGVGGTMSESAPATPANVPPAMANQTPQ) is disordered. C2H2-type zinc fingers lie at residues 1011 to 1034 (MRCR…LTDH), 1042 to 1065 (IKCK…FKVH), 1078 to 1101 (FECD…RSVH), 1154 to 1176 (YQCK…INSH), and 1184 to 1207 (YSCK…YKKH). Residues 1233 to 1253 (TPTCNRKPITSTGAHQQQDGQ) are compositionally biased toward polar residues. Residues 1233-1301 (TPTCNRKPIT…GNGTTVGVAS (69 aa)) form a disordered region. Residues 1255–1267 (HSHHTAKRTIFRH) are compositionally biased toward basic residues. Residues 1271–1283 (DDDDEEDDDEQQQ) show a composition bias toward acidic residues. 2 consecutive C2H2-type zinc fingers follow at residues 1318–1340 (VACT…IQKH) and 1375–1397 (YACD…RKWH). A compositionally biased stretch (low complexity) spans 1445 to 1467 (QQSLNNSCNSSMNHNNNSSSNRS). Positions 1445–1471 (QQSLNNSCNSSMNHNNNSSSNRSKSMK) are disordered. 2 consecutive C2H2-type zinc fingers follow at residues 1476-1499 (LKCE…YELH) and 1552-1574 (WGCD…INNH). A disordered region spans residues 1627–1865 (AAGATTTDKL…STGERRKKAV (239 aa)). A compositionally biased stretch (acidic residues) spans 1639–1695 (PDEEDSDDLDEDSSGDDDDSSGTGDDDDDDDSDDDEDGEGEDEDEEGDGGEGEDEEG). A compositionally biased stretch (low complexity) spans 1697 to 1715 (QPPAQLLPQQQHKTDLNLN). 2 stretches are compositionally biased toward acidic residues: residues 1716 to 1758 (QDDD…EEPE) and 1782 to 1829 (SDDE…EDEP). A compositionally biased stretch (low complexity) spans 1833 to 1851 (STASFSESESSTTTTSNSH). Residues 1873-1895 (FTCDLCQLCFDSQELLQSHIKSH) form a C2H2-type 16 zinc finger. The tract at residues 1933–1959 (PDSKSAVLANNNNSKTSSKTVAAGATN) is disordered. Over residues 1942 to 1952 (NNNNSKTSSKT) the composition is skewed to low complexity.

As to expression, expressed ubiquitously in the nervous system, in neurons not glia.

The protein localises to the nucleus. Functionally, required for normal development of ethanol tolerance. Relies on two distinct molecular pathways: a cellular stress pathway defined by hang, and a parallel pathway requiring octopamine. The polypeptide is Zinc finger protein hangover (hang) (Drosophila melanogaster (Fruit fly)).